We begin with the raw amino-acid sequence, 418 residues long: Histidinol dehydrogenase (418 aa).

Residues Tyr-119, Gln-180, and Asn-203 each coordinate NAD(+). 3 residues coordinate substrate: Thr-226, Gln-248, and His-251. The Zn(2+) site is built by Gln-248 and His-251. Active-site proton acceptor residues include Glu-316 and His-317. Substrate-binding residues include His-317, Asp-350, Glu-404, and His-409. Residue Asp-350 coordinates Zn(2+). Zn(2+) is bound at residue His-409.

The protein belongs to the histidinol dehydrogenase family. It depends on Zn(2+) as a cofactor.

The enzyme catalyses L-histidinol + 2 NAD(+) + H2O = L-histidine + 2 NADH + 3 H(+). Its pathway is amino-acid biosynthesis; L-histidine biosynthesis; L-histidine from 5-phospho-alpha-D-ribose 1-diphosphate: step 9/9. In terms of biological role, catalyzes the sequential NAD-dependent oxidations of L-histidinol to L-histidinaldehyde and then to L-histidine. The protein is Histidinol dehydrogenase of Staphylococcus aureus (strain COL).